The primary structure comprises 103 residues: NADH-quinone oxidoreductase subunit K (103 aa).

Transmembrane regions (helical) follow at residues 4–24 (LTSY…GVIA), 28–48 (IFVI…FLIT), and 64–84 (MVIS…ILLF).

It belongs to the complex I subunit 4L family. In terms of assembly, NDH-1 is composed of 14 different subunits. Subunits NuoA, H, J, K, L, M, N constitute the membrane sector of the complex.

The protein localises to the cell inner membrane. It catalyses the reaction a quinone + NADH + 5 H(+)(in) = a quinol + NAD(+) + 4 H(+)(out). Its function is as follows. NDH-1 shuttles electrons from NADH, via FMN and iron-sulfur (Fe-S) centers, to quinones in the respiratory chain. The immediate electron acceptor for the enzyme in this species is believed to be ubiquinone. Couples the redox reaction to proton translocation (for every two electrons transferred, four hydrogen ions are translocated across the cytoplasmic membrane), and thus conserves the redox energy in a proton gradient. The chain is NADH-quinone oxidoreductase subunit K from Aliarcobacter butzleri (strain RM4018) (Arcobacter butzleri).